The primary structure comprises 238 residues: MQFDPPLQPAILLKRYKRFLADVVTPDGRELTLHCPNTGAMTGCAAPGDTVWYSTSDNAKRKYAHTWELTETQQGAVICVNTLRANSLAKEAISAGIIPELSGYNQLKSEVKYGEENSRIDIMLQADDRQNCYIEVKSVTLAEKEYGYFPDAVTTRGQKHLRELMAVAANGDRAVILFAVLHSAIDRFSPAHHIDARYAQLLTEAQDKGVEILAWKAELSTTRMTLNKPIAVVLNPGK.

The protein belongs to the SfsA family.

The protein is Sugar fermentation stimulation protein homolog of Klebsiella pneumoniae subsp. pneumoniae (strain ATCC 700721 / MGH 78578).